The primary structure comprises 263 residues: Endonuclease 8 (263 aa).

Pro-2 (schiff-base intermediate with DNA) is an active-site residue. The active-site Proton donor is the Glu-3. Residue Lys-53 is the Proton donor; for beta-elimination activity of the active site. DNA is bound by residues Gln-70, Arg-125, and Asn-169. The segment at Lys-229 to His-263 adopts an FPG-type zinc-finger fold. Catalysis depends on Arg-253, which acts as the Proton donor; for delta-elimination activity.

The protein belongs to the FPG family. Requires Zn(2+) as cofactor.

It carries out the reaction 2'-deoxyribonucleotide-(2'-deoxyribose 5'-phosphate)-2'-deoxyribonucleotide-DNA = a 3'-end 2'-deoxyribonucleotide-(2,3-dehydro-2,3-deoxyribose 5'-phosphate)-DNA + a 5'-end 5'-phospho-2'-deoxyribonucleoside-DNA + H(+). Involved in base excision repair of DNA damaged by oxidation or by mutagenic agents. Acts as a DNA glycosylase that recognizes and removes damaged bases. Has a preference for oxidized pyrimidines, such as thymine glycol, 5,6-dihydrouracil and 5,6-dihydrothymine. Has AP (apurinic/apyrimidinic) lyase activity and introduces nicks in the DNA strand. Cleaves the DNA backbone by beta-delta elimination to generate a single-strand break at the site of the removed base with both 3'- and 5'-phosphates. This Shigella sonnei (strain Ss046) protein is Endonuclease 8.